Here is a 287-residue protein sequence, read N- to C-terminus: MKMILLLRKTKNISSFNFINNFKKTKGFKKIGHCGTLDPLATGLLIVATDEDTKLIDYLDQKDKTYVARAKLGFETTTYDSEGEIINQSSNVKFTKEKLIEVLNSFIGLTKQMPPKYSAKKLNGIRAYDLARQNIDFELNEVEINITKIKLLSYNEDENYFDFEVVVSRGTYIRSLIYDIGIKLNSLAYMESLERTKIGNLFLEKNQDDKILNAKEIIQLEIIQLEKNQIENLSKGLLIDLKNEDNFYALFWKDEMIGFGQILNNVLKSKKLIGKKIQKILGDKQSE.

The active-site Nucleophile is the Asp38.

Belongs to the pseudouridine synthase TruB family. Type 1 subfamily.

It carries out the reaction uridine(55) in tRNA = pseudouridine(55) in tRNA. In terms of biological role, responsible for synthesis of pseudouridine from uracil-55 in the psi GC loop of transfer RNAs. The sequence is that of tRNA pseudouridine synthase B from Mycoplasma mobile (strain ATCC 43663 / 163K / NCTC 11711) (Mesomycoplasma mobile).